The primary structure comprises 33 residues: Cytochrome b6-f complex subunit 6 (33 aa).

A helical transmembrane segment spans residues 4–24; that stretch reads ITIISYFGFLLASIIFTLVLF.

Belongs to the PetL family. As to quaternary structure, the 4 large subunits of the cytochrome b6-f complex are cytochrome b6, subunit IV (17 kDa polypeptide, PetD), cytochrome f and the Rieske protein, while the 4 small subunits are PetG, PetL, PetM and PetN. The complex functions as a dimer.

The protein localises to the plastid. Its subcellular location is the chloroplast thylakoid membrane. In terms of biological role, component of the cytochrome b6-f complex, which mediates electron transfer between photosystem II (PSII) and photosystem I (PSI), cyclic electron flow around PSI, and state transitions. PetL is important for photoautotrophic growth as well as for electron transfer efficiency and stability of the cytochrome b6-f complex. The protein is Cytochrome b6-f complex subunit 6 of Pinus thunbergii (Japanese black pine).